Consider the following 580-residue polypeptide: Zinc finger CCCH domain-containing protein 47 (580 aa).

2 ANK repeats span residues 72 to 102 (EERT…DVNR) and 107 to 139 (ERVT…LVNS). 2 consecutive C3H1-type zinc fingers follow at residues 251 to 278 (PYTC…HGVF) and 286 to 310 (QYKT…HKRE). The segment at 421–451 (YVSSPSRNSQMGQNMNQHYPSSPVRQPPSQH) is disordered.

In terms of tissue distribution, expressed in roots and anthers.

It is found in the nucleus. Functionally, involved in salt stress response. May positively modulate plant tolerance to salt stress. In Arabidopsis thaliana (Mouse-ear cress), this protein is Zinc finger CCCH domain-containing protein 47.